The sequence spans 464 residues: Myrosinase 1 (464 aa).

Position 19 (Gln19) interacts with substrate. Zn(2+)-binding residues include His39 and Asp52. 2 residues coordinate substrate: His122 and Asn166. Glu167 serves as the catalytic Nucleophile. The Proton donor role is filled by Glu374. Residue Asn397 is glycosylated (N-linked (GlcNAc...) asparagine).

As to quaternary structure, homodimer. As to expression, expressed in the skeletal muscle tissues surrounding the head, abdomen and thorax. Not expressed in flight muscles (at protein level).

It catalyses the reaction a thioglucoside + H2O = a sugar + a thiol.. In terms of biological role, hydrolyzes glucosinolates to a labile aglycone. This rapidly undergoes spontaneous rearrangement, eliminating sulfur to yield a number of toxic metabolites. Thereby developing a chemical defense system that exploits and mimics the host plant. The chain is Myrosinase 1 from Brevicoryne brassicae (Mealy cabbage aphid).